Reading from the N-terminus, the 440-residue chain is Chromosome partition protein MukF (440 aa).

The interval 208 to 236 is leucine-zipper; the sequence is LSETSGTLRELQDTLEAAGDKLQANLLRI.

The protein belongs to the MukF family. In terms of assembly, interacts, and probably forms a ternary complex, with MukE and MukB via its C-terminal region. The complex formation is stimulated by calcium or magnesium. It is required for an interaction between MukE and MukB.

Its subcellular location is the cytoplasm. It localises to the nucleoid. Functionally, involved in chromosome condensation, segregation and cell cycle progression. May participate in facilitating chromosome segregation by condensation DNA from both sides of a centrally located replisome during cell division. Not required for mini-F plasmid partitioning. Probably acts via its interaction with MukB and MukE. Overexpression results in anucleate cells. It has a calcium binding activity. The sequence is that of Chromosome partition protein MukF from Escherichia coli (strain UTI89 / UPEC).